A 258-amino-acid polypeptide reads, in one-letter code: Aspartate/glutamate leucyltransferase (258 aa).

This sequence belongs to the R-transferase family. Bpt subfamily.

Its subcellular location is the cytoplasm. It catalyses the reaction N-terminal L-glutamyl-[protein] + L-leucyl-tRNA(Leu) = N-terminal L-leucyl-L-glutamyl-[protein] + tRNA(Leu) + H(+). The enzyme catalyses N-terminal L-aspartyl-[protein] + L-leucyl-tRNA(Leu) = N-terminal L-leucyl-L-aspartyl-[protein] + tRNA(Leu) + H(+). Its function is as follows. Functions in the N-end rule pathway of protein degradation where it conjugates Leu from its aminoacyl-tRNA to the N-termini of proteins containing an N-terminal aspartate or glutamate. The polypeptide is Aspartate/glutamate leucyltransferase (Rhizobium leguminosarum bv. trifolii (strain WSM2304)).